A 162-amino-acid polypeptide reads, in one-letter code: Protein archease (162 aa).

3 residues coordinate Ca(2+): Asp-34, Asp-161, and Ile-162.

It belongs to the archease family. In terms of assembly, component of the tRNA-splicing ligase complex.

In terms of biological role, component of the tRNA-splicing ligase complex required to facilitate the enzymatic turnover of catalytic subunit RTCB. Together with ddx1, acts by facilitating the guanylylation of RTCB, a key intermediate step in tRNA ligation. In Danio rerio (Zebrafish), this protein is Protein archease (zbtb8os).